A 186-amino-acid polypeptide reads, in one-letter code: ADP-ribosylation factor-like protein 6 (186 aa).

Gly2 is lipidated: N-myristoyl glycine. GTP contacts are provided by residues 24–31 (GLDNSGKT), Thr50, 69–73 (DMSGQ), Gly72, 130–133 (NKMD), and Ala164. Residues Thr31 and Thr50 each contribute to the Mg(2+) site.

This sequence belongs to the small GTPase superfamily. Arf family. In terms of assembly, interacts with SEC61B, ARL6IP1, ARL6IP2, ARL6IP3, ARL6IP4 ARL6IP5 and ARL6IP6. Interacts (GTP-bound form) with the BBSome a complex that contains BBS1, BBS2, BBS4, BBS5, BBS7, BBS8/TTC8, BBS9 and BBIP10. Interacts (GTP-free form) with IFT27.

The protein localises to the cell projection. It is found in the cilium membrane. It localises to the cytoplasm. Its subcellular location is the cytoskeleton. The protein resides in the cilium axoneme. The protein localises to the cilium basal body. Its function is as follows. Involved in membrane protein trafficking at the base of the ciliary organelle. Mediates recruitment onto plasma membrane of the BBSome complex which would constitute a coat complex required for sorting of specific membrane proteins to the primary cilia. Together with BBS1, is necessary for correct trafficking of PKD1 to primary cilia. Together with the BBSome complex and LTZL1, controls SMO ciliary trafficking and contributes to the sonic hedgehog (SHH) pathway regulation. May regulate cilia assembly and disassembly and subsequent ciliary signaling events such as the Wnt signaling cascade. Isoform 2 may be required for proper retinal function and organization. This Homo sapiens (Human) protein is ADP-ribosylation factor-like protein 6 (ARL6).